An 82-amino-acid chain; its full sequence is Sec-independent protein translocase protein TatA (82 aa).

The chain crosses the membrane as a helical span at residues 1–21; the sequence is MGGISIWQLLIIAVIVVLLFG.

It belongs to the TatA/E family. The Tat system comprises two distinct complexes: a TatABC complex, containing multiple copies of TatA, TatB and TatC subunits, and a separate TatA complex, containing only TatA subunits. Substrates initially bind to the TatABC complex, which probably triggers association of the separate TatA complex to form the active translocon.

The protein resides in the cell inner membrane. In terms of biological role, part of the twin-arginine translocation (Tat) system that transports large folded proteins containing a characteristic twin-arginine motif in their signal peptide across membranes. TatA could form the protein-conducting channel of the Tat system. The sequence is that of Sec-independent protein translocase protein TatA from Vibrio cholerae serotype O1 (strain ATCC 39315 / El Tor Inaba N16961).